Consider the following 507-residue polypeptide: ATP synthase subunit alpha, chloroplastic (507 aa).

170 to 177 contacts ATP; that stretch reads GDRQTGKT.

This sequence belongs to the ATPase alpha/beta chains family. In terms of assembly, F-type ATPases have 2 components, CF(1) - the catalytic core - and CF(0) - the membrane proton channel. CF(1) has five subunits: alpha(3), beta(3), gamma(1), delta(1), epsilon(1). CF(0) has four main subunits: a, b, b' and c.

The protein resides in the plastid. The protein localises to the chloroplast thylakoid membrane. It catalyses the reaction ATP + H2O + 4 H(+)(in) = ADP + phosphate + 5 H(+)(out). Its function is as follows. Produces ATP from ADP in the presence of a proton gradient across the membrane. The alpha chain is a regulatory subunit. The chain is ATP synthase subunit alpha, chloroplastic from Lemna minor (Common duckweed).